Here is a 179-residue protein sequence, read N- to C-terminus: GTP-dependent dephospho-CoA kinase (179 aa).

Residues Asp-43, Val-45, Asp-62, Glu-120, and Asp-143 each coordinate GTP.

This sequence belongs to the GTP-dependent DPCK family.

It catalyses the reaction 3'-dephospho-CoA + GTP = GDP + CoA + H(+). It participates in cofactor biosynthesis; coenzyme A biosynthesis. Functionally, catalyzes the GTP-dependent phosphorylation of the 3'-hydroxyl group of dephosphocoenzyme A to form coenzyme A (CoA). The chain is GTP-dependent dephospho-CoA kinase from Haloarcula marismortui (strain ATCC 43049 / DSM 3752 / JCM 8966 / VKM B-1809) (Halobacterium marismortui).